The primary structure comprises 224 residues: Agamous-like MADS-box protein AGL9 homolog (224 aa).

The MADS-box domain maps to 3-57; it reads RGRVELKRIEGKINRQVTFAKRRNGLLKKAYELSVLCDAEVALIIFSNRGKLYEF. The 91-residue stretch at 89–179 folds into the K-box domain; sequence EISSQQEYLK…KQRLMEGSQL (91 aa).

In terms of tissue distribution, flower specific.

It is found in the nucleus. Probable transcription factor active in inflorescence development and floral organogenesis. In Solanum lycopersicum (Tomato), this protein is Agamous-like MADS-box protein AGL9 homolog (TDR5).